A 729-amino-acid polypeptide reads, in one-letter code: Polyribonucleotide nucleotidyltransferase (729 aa).

Asp-485 and Asp-491 together coordinate Mg(2+). Residues 552–611 (PRITTMKVAEDKIRTIIGKGGATIKGLIESTGVSIDIDDSGVIQLFSPDKMALEEAQKQI) form the KH domain. The region spanning 621 to 689 (GQTYQGKVSK…KQGRVKLEWK (69 aa)) is the S1 motif domain.

This sequence belongs to the polyribonucleotide nucleotidyltransferase family. In terms of assembly, component of the RNA degradosome, which is a multiprotein complex involved in RNA processing and mRNA degradation. Mg(2+) serves as cofactor.

The protein resides in the cytoplasm. It carries out the reaction RNA(n+1) + phosphate = RNA(n) + a ribonucleoside 5'-diphosphate. In terms of biological role, involved in mRNA degradation. Catalyzes the phosphorolysis of single-stranded polyribonucleotides processively in the 3'- to 5'-direction. The sequence is that of Polyribonucleotide nucleotidyltransferase from Legionella pneumophila (strain Corby).